Reading from the N-terminus, the 342-residue chain is tRNA N6-adenosine threonylcarbamoyltransferase (342 aa).

Fe cation is bound by residues His115 and His119. Residues 137–141 (IVSGG), Asp170, Gly183, Asp187, and Asn276 each bind substrate. Fe cation is bound at residue Asp304.

It belongs to the KAE1 / TsaD family. Fe(2+) serves as cofactor.

It localises to the cytoplasm. The catalysed reaction is L-threonylcarbamoyladenylate + adenosine(37) in tRNA = N(6)-L-threonylcarbamoyladenosine(37) in tRNA + AMP + H(+). Its function is as follows. Required for the formation of a threonylcarbamoyl group on adenosine at position 37 (t(6)A37) in tRNAs that read codons beginning with adenine. Is involved in the transfer of the threonylcarbamoyl moiety of threonylcarbamoyl-AMP (TC-AMP) to the N6 group of A37, together with TsaE and TsaB. TsaD likely plays a direct catalytic role in this reaction. The protein is tRNA N6-adenosine threonylcarbamoyltransferase of Staphylococcus haemolyticus (strain JCSC1435).